A 274-amino-acid chain; its full sequence is Prolyl 4-hydroxylase 13 (274 aa).

At Met1 to Leu10 the chain is on the cytoplasmic side. The chain crosses the membrane as a helical; Signal-anchor for type II membrane protein span at residues Val11–Phe31. At Asn32–Asp274 the chain is on the lumenal side. Positions Tyr151–Asp270 constitute a Fe2OG dioxygenase domain. 2 residues coordinate Fe cation: His169 and Asp171. N-linked (GlcNAc...) asparagine glycosylation is present at Asn242. His251 contributes to the Fe cation binding site. Residue Lys261 participates in 2-oxoglutarate binding.

It belongs to the P4HA family. The cofactor is Fe(2+). It depends on L-ascorbate as a cofactor. As to expression, expressed in epidermal root hair cells (trichoblasts) root hairless cells (atrichoblasts).

It localises to the endoplasmic reticulum membrane. It catalyses the reaction L-prolyl-[collagen] + 2-oxoglutarate + O2 = trans-4-hydroxy-L-prolyl-[collagen] + succinate + CO2. Functionally, catalyzes the post-translational formation of 4-hydroxyproline in -Xaa-Pro-Gly- sequences in proline-rich peptide sequences of plant glycoproteins and other proteins. Hydroxyprolines are important constituent of many plant cell wall glycoproteins such as extensins, hydroxyproline-rich glycoproteins, lectins and arabinogalactan proteins. Possesses high affinity for leucine-rich repeat and proline-rich extensins of root cell walls that are essential for root hair development. Hydroxyprolines define the subsequent O-glycosylation sites by arabinosyltransferases which elongate the O-arabinosides on extensins. The sequence is that of Prolyl 4-hydroxylase 13 from Arabidopsis thaliana (Mouse-ear cress).